The sequence spans 251 residues: Esterase mlcF (251 aa).

Residues serine 126, aspartate 193, and histidine 221 each act as charge relay system in the active site.

Belongs to the LovG family.

It carries out the reaction dihydro-ML-236C-[compactin nonaketide synthase] + H2O = holo-[compactin nonaketide synthase] + dihydro-ML-236C carboxylate + H(+). Its pathway is polyketide biosynthesis. Functionally, esterase; part of the gene cluster that mediates the biosynthesis of compactin, also known as mevastatin or ML-236B, and which acts as a potent competitive inhibitor of HMG-CoA reductase. Compactin biosynthesis is performed in two stages. The first stage is catalyzed by the nonaketide synthase mlcA, which belongs to type I polyketide synthases and catalyzes the iterative nine-step formation of the polyketide. This PKS stage is completed by the action of dehydrogenase mlcG, which catalyzes the NADPH-dependent reduction of the unsaturated tetra-, penta- and heptaketide intermediates that arise during the mlcA-mediated biosynthesis of the nonaketide chain and leads to dihydro-ML-236C carboxylate. Covalently bound dihydro-ML-236C carboxylate is released from mlcA by the mlcF esterase. Conversion of dihydro-ML-236C carboxylate into ML-236A carboxylate is subsequently performed with the participation of molecular oxygen and P450 monoogygenase mlcC. Finally, mlcH performs the conversion of ML-236A carboxylate to ML-236B/compactin carboxylate through the addition of the side-chain diketide moiety produced by the diketide synthase mlcB. The chain is Esterase mlcF from Penicillium citrinum.